The sequence spans 157 residues: Vitamin K-dependent protein C (157 aa).

A Peptidase S1 domain is found at 1–157 (ENGEVDLDIQ…GCGRLHNYGV (157 aa)). N-linked (GlcNAc...) asparagine glycosylation occurs at N17. Catalysis depends on D26, which acts as the Charge relay system. N78 carries N-linked (GlcNAc...) asparagine glycosylation. 2 cysteine pairs are disulfide-bonded: C96/C110 and C121/C149. The active-site Charge relay system is the S125.

This sequence belongs to the peptidase S1 family. Plasma; synthesized in the liver.

Its subcellular location is the secreted. The protein localises to the golgi apparatus. It is found in the endoplasmic reticulum. The catalysed reaction is Degradation of blood coagulation factors Va and VIIIa.. In terms of biological role, protein C is a vitamin K-dependent serine protease that regulates blood coagulation by inactivating factors Va and VIIIa in the presence of calcium ions and phospholipids. Exerts a protective effect on the endothelial cell barrier function. This chain is Vitamin K-dependent protein C (PROC), found in Equus caballus (Horse).